The chain runs to 261 residues: Rho-related GTP-binding protein RhoU (261 aa).

The segment at 1–48 (MAPQQGRPALPARCEPPAAPPVPPRRERGGRGARGPGVSGGRGRAGGA) is disordered. A compositionally biased stretch (low complexity) spans 7–16 (RPALPARCEP). A compositionally biased stretch (gly residues) spans 32-48 (GARGPGVSGGRGRAGGA). GTP contacts are provided by residues 59-66 (GDGAVGKT), 106-110 (DTAGQ), and 164-167 (TQSD). Glycyl lysine isopeptide (Lys-Gly) (interchain with G-Cter in ubiquitin) cross-links involve residues K180 and K251. The S-palmitoyl cysteine moiety is linked to residue C259.

It belongs to the small GTPase superfamily. Rho family. Interacts with PAK1. Interacts with PAK3. Interacts with ARHGAP30 in a GTP-independent manner. In its GTP-loaded conformation, interacts with ARHGAP31. Interacts with PTK2B/PYK2. Interacts with PAK4; interaction protects RHOU from ubiquitination and subsequent degradation. The cofactor is Mg(2+). Post-translationally, tyrosine phosphorylated by SRC in response to PTK2B/PYK2 activation. Ubiquitinated. 'Lys-48'-linked ubiquitination at Lys-180 and Lys-251 by the ECS(RAB40A) complex leading to its degradation.

The protein localises to the cell membrane. It localises to the golgi apparatus membrane. Its subcellular location is the cell junction. The protein resides in the focal adhesion. It is found in the cell projection. The protein localises to the podosome. Binds to and activates protein kinase PAK1. Plays a role in the regulation of cell morphology, cytoskeletal organization and focal adhesion assembly during cell migration. Also stimulates quiescent cells to reenter the cell cycle. Has no detectable GTPase activity but its high intrinsic guanine nucleotide exchange activity suggests it is constitutively GTP-bound. This is Rho-related GTP-binding protein RhoU from Mus musculus (Mouse).